The chain runs to 125 residues: Protein ApaG (125 aa).

Residues 1 to 125 enclose the ApaG domain; sequence MFTSSKVAIQ…FRLAIPTLIN (125 aa).

The polypeptide is Protein ApaG (Proteus mirabilis (strain HI4320)).